Consider the following 140-residue polypeptide: 3-hydroxyacyl-[acyl-carrier-protein] dehydratase FabZ (140 aa).

H48 is a catalytic residue.

The protein belongs to the thioester dehydratase family. FabZ subfamily.

The protein resides in the cytoplasm. It catalyses the reaction a (3R)-hydroxyacyl-[ACP] = a (2E)-enoyl-[ACP] + H2O. Involved in unsaturated fatty acids biosynthesis. Catalyzes the dehydration of short chain beta-hydroxyacyl-ACPs and long chain saturated and unsaturated beta-hydroxyacyl-ACPs. The chain is 3-hydroxyacyl-[acyl-carrier-protein] dehydratase FabZ from Oceanobacillus iheyensis (strain DSM 14371 / CIP 107618 / JCM 11309 / KCTC 3954 / HTE831).